We begin with the raw amino-acid sequence, 299 residues long: Protoheme IX farnesyltransferase (299 aa).

9 helical membrane-spanning segments follow: residues 27-47, 53-73, 97-117, 121-141, 149-169, 175-195, 222-242, 244-264, and 273-293; these read VVAL…HEHF, LIAL…NHLI, FNVL…LMLW, LTAY…TLYL, IVIA…SITG, AWVL…ALAI, ILLY…VGMA, YLYL…AIKL, and AIEM…ALLL.

It belongs to the UbiA prenyltransferase family. Protoheme IX farnesyltransferase subfamily.

The protein localises to the cell inner membrane. The enzyme catalyses heme b + (2E,6E)-farnesyl diphosphate + H2O = Fe(II)-heme o + diphosphate. Its pathway is porphyrin-containing compound metabolism; heme O biosynthesis; heme O from protoheme: step 1/1. Converts heme B (protoheme IX) to heme O by substitution of the vinyl group on carbon 2 of heme B porphyrin ring with a hydroxyethyl farnesyl side group. The polypeptide is Protoheme IX farnesyltransferase (Vibrio vulnificus (strain CMCP6)).